The sequence spans 264 residues: tRNA (guanine-N(7)-)-methyltransferase (264 aa).

The interval 1–39 is disordered; sequence MIHDDDPNAPGAPHDDATAAPASATRAAPAAGDDDDANP. The span at 18 to 31 shows a compositional bias: low complexity; that stretch reads TAAPASATRAAPAA. S-adenosyl-L-methionine is bound by residues Glu94, Glu119, Asp146, and Asp169. The active site involves Asp169. Residues Lys173, Asp205, and 240–243 each bind substrate; that span reads TKFE.

Belongs to the class I-like SAM-binding methyltransferase superfamily. TrmB family.

It carries out the reaction guanosine(46) in tRNA + S-adenosyl-L-methionine = N(7)-methylguanosine(46) in tRNA + S-adenosyl-L-homocysteine. It functions in the pathway tRNA modification; N(7)-methylguanine-tRNA biosynthesis. Its function is as follows. Catalyzes the formation of N(7)-methylguanine at position 46 (m7G46) in tRNA. The chain is tRNA (guanine-N(7)-)-methyltransferase from Burkholderia mallei (strain ATCC 23344).